The chain runs to 2523 residues: MNPPSALAFGPEERIPTASNLRLLKDVLQDDPTFAGITACLKQLPDTWKALLHQDAQLQSLASERRAAVLSNSLLNDEQHEGDMDTNQVIMPMTVLVHMVQYRQFLQQSSPSSHATVMQSVAAGGVQGFCAGLLSAFAVCSMTNEDDFDACATYAIKLAMCVGAYVDLAMESEKGDMASAIVRWSIPDGRNRVNKAVGRYQSAYISAISDEDNVTVTASRPDLDAICTSLGSTGMSSKILAMTGSFHHPKNFDLLQRMISLLRAPQLAPSTKFTNALLRSNSTGELLTGAKTIENILEDILCKTADWRLTMANTSKALRSGNGSRPNIHTFGLVEFIPSFVKNEFNILTQRLAPTAKEQTGASPSKSTLQYNDNAVAVVGMACRFPGADDLDEFWELLQSGKSMHERMPADRFSTTGLRRSNDGAPFWGNFLKDIDAFDHQFFKKSSREAAAMDPQQRLLLQCAYVAMENAGYFDPSVQHKIRDTGVYLGACSSDYNDNVASHKPTAYSTLGTLRAFLTGRISHYFDWTGPSVVYDTACSSSAVAIDAACKAILAGDCQQALAGGVSLYTSPNFYQNLDAASFLSQTGPCKPFDANADGYCRGEGVGLVVLKKLSDAIRCGDKIVAVIASTGVNQNRNCTGITVPHGGSQADLYRRVVAKSGLNASQVSYVEAHGTGTPVGDPIEFTSIKSVFANPDITRDEPLTIASVKGSIGHLEGAAGVASLIKVCLMLQHSAIPPQANFTKPNPNLGGVDMRNIVIPTSSIPWKARNKVACINNYGAAGSNGAMIVCQPSEPASKTQTRLPSQSLSYPLFISGDGTDAVEANCRAIAKYARQLQQKRAPSVVASLAYRLATSQNQNLSYAMVTTISENGDIESTLTKASATLTQPRSKAKQSVVLCFGGQVKAFVGLDQQLFDSSSILQKHLRLCDSTMRDLGYPSIFPAIFQSEPLKDPVQLHGVLFAMQYSSAKAWLDCSLQVDAVVGHSFGQLTALTVAGVLSLKDGLRLVCGRAHLIKTKWGSATGAMIAIEAPLIRVQEILSKISVAGHEAEIACYNARESHVLVGTTTAIDAVRTFVLESGIKHKRLPVTHGFHSTFTEALLPGLRELAKGLQFKSPIIPIETCTEYKSWEQATADMITKHTREPVYFVHAIERLSARLGPCTWVEAGTGASTPAMIKRCLPDSCADSFIHATLESNKAFGSLADATANLWRCSQPVQFWPFHASDRGRYVPLNLPGYQFRKTKHWLEWQDTVALPAFLEKEPSTSEPKGHELLTFSSFEDTSKSVAAFKVDPESDEFMMLVKGHAVVAQPLCPAPLYCELALRAIKHLSPETASNAPDIRDLQIHAPLGLKTNRNIRLVVQKNSIPGHWTFTVKSSMGSDDELTHAHGLVAFGGTVEQELASYQRLIGHQKIQSLMTDPECDALRGSATYKAFNRVVTYSSYYKGVQAIYGRQNEACGKIELSSGEEQMAQARGILTPLLADNFIQIAGLQINVLGDCEDHLVFVCTETQRIIYGPGLHQQPAARYEVYSTISQNGPKEVMSDVVVFDPATKNVEFVALGCRFTRVTVPGLRNALQAANGDARAQERPSGSRISPSPLAPELPAKIQIQSRENLDITEKSGRGKPPRVENIQIATPKVDYLAQVKALLHKVSDVPIDTIQKDSTLDDLGIDSLMVMEVQTEVHSEFQLTIPNKDWATLETPGKLAEYLAKTLGGSVPDSAPPGVQRVPALVISDAEQSSDESPYDSTDDSASGYGDLDIDTAATTPGIFATRDSSPFRKAALDSPNPVNKVAQRTFSDIRPKYDVFAAEEGFAGFWRDVYPRQKRLTLAYVVEAFAVMGCDLSDLAAGQILPKIEYLPQHVSLIKQLYVILADSTLITIENGTYRRTRVSVDTTPASDLLADILRAFPQHAEEHRLLDVTGSRLGDCLIGRADPLRLLFMDRANKELLDSVYANGPMYKAMSRLLGSYILDTMQQWQGQKPLRILEIGGGTGGTTKHIVKLLHQQGIDFTYCFSDLSRALVTKAKKTFSIYPQMEYMVLDIEAPPSSEYLGQFDLILSTNCIHATKNIQQTTKHMRQLLSSEGFICLVEFTRNIFWFDLVFGLLDGWWLFEDGRPHVLADENLWDQSLRAAGYGDVQWTEGQSEESKTLRLIAAFNVSNEDAKAANALASALAVPGRKGRTSATTIRWKQEGDLDLMADVYLPSDLDASTVSRPVALILHGGGHVLHTRKHINPRHIKMLQDLGFLPVSVDYRLCPEVNIRDGPMTDACEAVDWARNILPCLPVCSELRVDKEHVVVIGYSTGGHLALTTAFTTRVRGFKPPSAILGFYCPTNYSADWWRSPIYPELAQQSSSETFDLLEGVNEHAIAGYTPTVNNNVAALLMSLDDPRWRFVLHANWRAQTLPMLINGLPSKSRLARSGQTVDSVINREIPDAEDVASISPYDQIVRGSYSTPTFLLHGTKDDLIPWQQSIATVDALARRGVNARVEIIEGAEHCFDVWSDKYDGMIGRALEWLVEQCRNA.

Positions 58–247 are N-terminal acylcarrier protein transacylase domain (SAT); sequence LQSLASERRA…KILAMTGSFH (190 aa). Residues 373-792 enclose the Ketosynthase family 3 (KS3) domain; sequence DNAVAVVGMA…GSNGAMIVCQ (420 aa). Catalysis depends on for beta-ketoacyl synthase activity residues Cys539, His674, and His715. The tract at residues 900–1207 is malonyl-CoA:ACP transacylase (MAT) domain; that stretch reads CFGGQVKAFV…KAFGSLADAT (308 aa). The active-site For acyl/malonyl transferase activity is Ser986. The N-terminal hotdog fold stretch occupies residues 1271 to 1398; that stretch reads HELLTFSSFE…GLVAFGGTVE (128 aa). The PKS/mFAS DH domain maps to 1271–1573; sequence HELLTFSSFE…FTRVTVPGLR (303 aa). Residues 1301-1568 form a product template (PT) domain region; it reads LVKGHAVVAQ…ALGCRFTRVT (268 aa). His1305 acts as the Proton acceptor; for dehydratase activity in catalysis. Residues 1421 to 1573 are C-terminal hotdog fold; the sequence is ECDALRGSAT…FTRVTVPGLR (153 aa). Asp1483 acts as the Proton donor; for dehydratase activity in catalysis. Positions 1579–1601 are disordered; sequence ANGDARAQERPSGSRISPSPLAP. In terms of domain architecture, Carrier spans 1639-1713; sequence VDYLAQVKAL…KLAEYLAKTL (75 aa). Residue Ser1673 is modified to O-(pantetheine 4'-phosphoryl)serine. The disordered stretch occupies residues 1735-1757; the sequence is DAEQSSDESPYDSTDDSASGYGD. A compositionally biased stretch (acidic residues) spans 1738–1749; it reads QSSDESPYDSTD. The tract at residues 1986 to 2085 is methyltransferase (CMeT) domain; the sequence is LEIGGGTGGT…MRQLLSSEGF (100 aa). Positions 2218–2520 are thioesterase (TE) domain; sequence LILHGGGHVL…RALEWLVEQC (303 aa).

Pantetheine 4'-phosphate is required as a cofactor.

It catalyses the reaction 3 malonyl-CoA + acetyl-CoA + S-adenosyl-L-methionine + H(+) = 3-methylorsellinate + S-adenosyl-L-homocysteine + 3 CO2 + 4 CoA. In terms of biological role, non-reducing polyketide synthase; part of a gene cluster that mediates the biosynthesis of a yet unidentified natural product. The first step in the pathway is performed by Preu3 that condenses one acetyl-CoA starter unit with 3 malonyl-CoA units. Preu3 also catalyzes one methylation step to produce 3-methylorsellinate, an intermediate that exhibits significant antibacterial activities against methicillin-resistant Staphylococcus aureus, multidrug-resistant Enterococcus faecalis, multidrug-resistant Enterococcus faecium, and multidrug-resistant Staphylococcus epidermidis. This Preussia isomera (Coprophilous fungus) protein is Non-reducing polyketide synthase Preu3.